A 619-amino-acid chain; its full sequence is MKYFKGISFYIIIFILILVIITFFTATDNPPKMSYSELLTEMKAGNVKSIGLQTDTATIELKKPKENNRTKFVVIVPPDVTSASERFTAALDNKLIEDFHVTQPPQPPWWVSMLPTVGLVIILILIWFFFIQQSQGGGGGNRVMSFGKSRAKMTVDDKKKITFENVAGADEEKEELAEIVEFLKAPKKFVELGARIPKGVLLVGPPGTGKTLLAKAVSGEAGVPFFSISGSDFVEMFVGVGASRVRDLFEQAKKNAPCIVFIDEIDAVGRHRGAGLGGGHDEREQTLNQLLVEMDGFGINEGVIILAATNRPDILDPALLRPGRFDRRVVVGLPDIKGREQILKVHSRGKPLADDVRLDDLARITPGFTGADIENLLNEAALLTARANKKKIGNEEIKEAAFKVMMGPEKKSRVMSEHDKKVTAYHEAGHAIAIKLVSSSQKVDRVSIIPAGMAGGYTASRPQEDKSYHTRSQLIEEIIIALGGRAAEEITMDEVSTGASSDLKKVNQIARNMVTKYGMSEKLGNMIFGNDNDEVFIGRDLAQARNYSDELAAIIDNEVKSIIDNAYQKTVSLLRENIVRLNKLAEVLLEKEKVEGAEFEEIFENAVLEGSSQTPQLEG.

At 1–5 (MKYFK) the chain is on the cytoplasmic side. The chain crosses the membrane as a helical span at residues 6 to 26 (GISFYIIIFILILVIITFFTA). At 27–110 (TDNPPKMSYS…VTQPPQPPWW (84 aa)) the chain is on the extracellular side. Residues 111-131 (VSMLPTVGLVIILILIWFFFI) form a helical membrane-spanning segment. At 132 to 619 (QQSQGGGGGN…GSSQTPQLEG (488 aa)) the chain is on the cytoplasmic side. 204 to 211 (GPPGTGKT) contacts ATP. H426 contributes to the Zn(2+) binding site. Residue E427 is part of the active site. Zn(2+) contacts are provided by H430 and D502.

The protein in the central section; belongs to the AAA ATPase family. In the C-terminal section; belongs to the peptidase M41 family. In terms of assembly, homohexamer. The cofactor is Zn(2+).

The protein resides in the cell membrane. Functionally, acts as a processive, ATP-dependent zinc metallopeptidase for both cytoplasmic and membrane proteins. Plays a role in the quality control of integral membrane proteins. This chain is ATP-dependent zinc metalloprotease FtsH, found in Ruminiclostridium cellulolyticum (strain ATCC 35319 / DSM 5812 / JCM 6584 / H10) (Clostridium cellulolyticum).